The sequence spans 267 residues: Integral membrane protein 2C (267 aa).

Thr-37 is subject to Phosphothreonine. The chain crosses the membrane as a helical; Signal-anchor for type II membrane protein span at residues 55–75 (VGGVCYLSMGMVVLLMGLVFA). The 95-residue stretch at 136-230 (FGGGDPADII…LCNGKDTYRL (95 aa)) folds into the BRICHOS domain. A disulfide bridge links Cys-163 with Cys-222. Residue Asn-169 is glycosylated (N-linked (GlcNAc...) asparagine).

Belongs to the ITM2 family. In terms of assembly, interacts with BACE1. Interacts with APP. Interacts with STMN2. In terms of processing, type I membrane-bound, as well as soluble, furin has a pre-eminent role in ITM2C proteolytic processing. PCSK7 and PCSK5 may also be involved although to a lesser extent. The soluble form of PCSK7 is incapable of processing ITM2C. Fails to undergo shedding by ADAM10 and intramembrane cleavage by SPPL2B.

The protein localises to the lysosome membrane. Its subcellular location is the cell membrane. Negative regulator of amyloid-beta peptide production. May inhibit the processing of APP by blocking its access to alpha- and beta-secretase. Binding to the beta-secretase-cleaved APP C-terminal fragment is negligible, suggesting that ITM2C is a poor gamma-secretase cleavage inhibitor. May play a role in TNF-induced cell death and neuronal differentiation. The protein is Integral membrane protein 2C (ITM2C) of Macaca fascicularis (Crab-eating macaque).